Consider the following 557-residue polypeptide: Formate--tetrahydrofolate ligase 1 (557 aa).

66–73 (TPAGEGKT) is a binding site for ATP.

Belongs to the formate--tetrahydrofolate ligase family.

It carries out the reaction (6S)-5,6,7,8-tetrahydrofolate + formate + ATP = (6R)-10-formyltetrahydrofolate + ADP + phosphate. It participates in one-carbon metabolism; tetrahydrofolate interconversion. The sequence is that of Formate--tetrahydrofolate ligase 1 from Streptococcus sanguinis (strain SK36).